The chain runs to 405 residues: MENIMTLPKIKQVRAWFTGGAIAEKGAGGGDYHDQGANHWIDDHIATPMSKYRDYEQSRQSFGINVLGTLVVEVEAENGQTGFAVSTAGEMGCFIVEKHLNRFIEGKCVSDIKLIHDQMLNATLYYSGSGGLVMNTISCVDLALWDLFGKVVGLPVYKLLGGAVRDEIQFYATGARPDLAKEMGFIGGKMPTHWGPHDGDAGIRKDAAMVADMREKCGEDFWLMLDCWMSQDVNYATKLAHACAPYNLKWIEECLPPQQYEGYRELKHNAPAGMMVTSGEHHGTLQSFRTLSETGIDIMQPDVGWCGGLTTLVEIAAIAKSRGQLVVPHGSSVYSHHAVITFTNTPFSEFLMTSPDCSTMRPQFDPILLNEPVPVNGRIHKSVLDKPGFGVELNRDCNLKRPYSH.

Substrate contacts are provided by H33 and R59. Mg(2+)-binding residues include D226, E252, and E280. H329 functions as the Proton acceptor in the catalytic mechanism. Substrate is bound at residue E349.

It belongs to the mandelate racemase/muconate lactonizing enzyme family. RhamD subfamily. As to quaternary structure, homooctamer; tetramer of dimers. The cofactor is Mg(2+).

The catalysed reaction is L-rhamnonate = 2-dehydro-3-deoxy-L-rhamnonate + H2O. Functionally, catalyzes the dehydration of L-rhamnonate to 2-keto-3-deoxy-L-rhamnonate (KDR). In Escherichia coli O45:K1 (strain S88 / ExPEC), this protein is L-rhamnonate dehydratase.